Here is a 373-residue protein sequence, read N- to C-terminus: MKSPAVPALDLPAEGETGVVDIGPLTLESGAVIDDVSIAVQRWGELSPNRDNVVMVLHALTGDSHVTGPAGPDHPTPGWWDGVAGPGAPIDTDRWCAVSTNVLGGCRGSTGPSSIAPDGRPYGSRFPAVTIRDQVTADLAALEALGITEVAAVVGGSMGGARALEWIVGHPATVRSALILAVGARATADQIGTQSTQVAAIKADPDWCGGDYHDTGRVPSTGLAIARRFAHLTYRGEVELDDRFGNHAQGDESPTDGGRYAVQSYLEYQGAKLVERFDAGTYVTLTDALSSHDVGRGRGGVRAALQGCRVPTIVGGVTSDRLYPLRLQQELAELLPGCTGLDVVDSVYGHDGFLVETEAVGKLIRRTLELAER.

The AB hydrolase-1 domain maps to 52–356 (NVVMVLHALT…VYGHDGFLVE (305 aa)). Catalysis depends on Ser157, which acts as the Nucleophile. Arg227 contributes to the substrate binding site. Residues Asp320 and His350 contribute to the active site. Asp351 contacts substrate.

The protein belongs to the AB hydrolase superfamily. MetX family. In terms of assembly, homodimer.

It localises to the cytoplasm. It catalyses the reaction L-homoserine + acetyl-CoA = O-acetyl-L-homoserine + CoA. Its pathway is amino-acid biosynthesis; L-methionine biosynthesis via de novo pathway; O-acetyl-L-homoserine from L-homoserine: step 1/1. Functionally, transfers an acetyl group from acetyl-CoA to L-homoserine, forming acetyl-L-homoserine. This is Homoserine O-acetyltransferase from Mycobacterium sp. (strain KMS).